A 359-amino-acid polypeptide reads, in one-letter code: Protein-arginine kinase (359 aa).

In terms of domain architecture, Phosphagen kinase C-terminal spans 25–257; sequence IVISSRVRLA…QQVIEQERML (233 aa). ATP is bound by residues 28 to 32, H93, R128, 179 to 183, and 210 to 215; these read SSRVR, RASLM, and RGIYGE. An RDXXRA motif of the pArg binding pocket involved in allosteric regulation motif is present at residues 340 to 345; the sequence is RDAKRA.

This sequence belongs to the ATP:guanido phosphotransferase family.

The catalysed reaction is L-arginyl-[protein] + ATP = N(omega)-phospho-L-arginyl-[protein] + ADP + H(+). With respect to regulation, appears to be allosterically activated by the binding of pArg-containing polypeptides to the pArg-binding pocket localized in the C-terminal domain of McsB. Functionally, catalyzes the specific phosphorylation of arginine residues in proteins. The polypeptide is Protein-arginine kinase (Syntrophomonas wolfei subsp. wolfei (strain DSM 2245B / Goettingen)).